Consider the following 554-residue polypeptide: Raftlin (554 aa).

Gly-2 is lipidated: N-myristoyl glycine. Cys-3 carries S-palmitoyl cysteine lipidation. Ser-183 and Ser-199 each carry phosphoserine. Disordered regions lie at residues 192-249 (CTLG…NEAG), 441-488 (KKRE…DQFS), and 504-554 (GRAS…TEAN). 2 stretches are compositionally biased toward basic and acidic residues: residues 198 to 209 (SSLENDTPKAAE) and 475 to 487 (QAEENEKNLEDQF). Residues Ser-507 and Ser-530 each carry the phosphoserine modification. A compositionally biased stretch (basic and acidic residues) spans 526–542 (HNRDSVALRHSNPRAEA).

Belongs to the raftlin family. As to quaternary structure, interacts with TLR4; the interaction occurs in response to lipopolysaccharide stimulation. Interacts with CLTC; the interaction occurs in response to pathogens. Interacts with AP2A1 and AP2B1. Expressed in T-cells, B-cells, thymus and spleen (at protein level). Expressed in dendritic cells, macrophages, heart, lung and small intestine.

It localises to the cell membrane. The protein localises to the cytoplasm. Its subcellular location is the membrane raft. The protein resides in the endosome. It is found in the early endosome. Its function is as follows. Involved in protein trafficking via association with clathrin and AP2 complex. Upon bacterial lipopolysaccharide stimulation, mediates internalization of TLR4 to endosomes in dendritic cells and macrophages, and internalization of poly(I:C) to TLR3-positive endosomes in myeloid dendritic cells and epithelial cells; resulting in activation of TICAM1-mediated signaling and subsequent IFNB1 production. Involved in T-cell antigen receptor-mediated signaling by regulating tyrosine kinase LCK localization, T-cell dependent antibody production and cytokine secretion. May regulate B-cell antigen receptor-mediated signaling. May play a pivotal role in the formation and/or maintenance of lipid rafts. In Mus musculus (Mouse), this protein is Raftlin (Rftn1).